We begin with the raw amino-acid sequence, 297 residues long: ATP phosphoribosyltransferase (297 aa).

This sequence belongs to the ATP phosphoribosyltransferase family.

It is found in the cytoplasm. The catalysed reaction is 1-(5-phospho-beta-D-ribosyl)-ATP + diphosphate = 5-phospho-alpha-D-ribose 1-diphosphate + ATP. Its pathway is amino-acid biosynthesis; L-histidine biosynthesis; L-histidine from 5-phospho-alpha-D-ribose 1-diphosphate: step 1/9. Functionally, catalyzes the condensation of ATP and 5-phosphoribose 1-diphosphate to form N'-(5'-phosphoribosyl)-ATP (PR-ATP). Has a crucial role in the pathway because the rate of histidine biosynthesis seems to be controlled primarily by regulation of the enzymatic activity. This Kluyveromyces lactis (strain ATCC 8585 / CBS 2359 / DSM 70799 / NBRC 1267 / NRRL Y-1140 / WM37) (Yeast) protein is ATP phosphoribosyltransferase (HIS1).